The sequence spans 87 residues: uncharacterized protein (87 aa).

This is an uncharacterized protein from Enterobacteria phage T4 (Bacteriophage T4).